A 253-amino-acid polypeptide reads, in one-letter code: Phosphoadenosine 5'-phosphosulfate reductase (253 aa).

Cys-242 functions as the Nucleophile; cysteine thiosulfonate intermediate in the catalytic mechanism.

Belongs to the PAPS reductase family. CysH subfamily.

The protein localises to the cytoplasm. It catalyses the reaction [thioredoxin]-disulfide + sulfite + adenosine 3',5'-bisphosphate + 2 H(+) = [thioredoxin]-dithiol + 3'-phosphoadenylyl sulfate. The protein operates within sulfur metabolism; hydrogen sulfide biosynthesis; sulfite from sulfate: step 3/3. In terms of biological role, catalyzes the formation of sulfite from phosphoadenosine 5'-phosphosulfate (PAPS) using thioredoxin as an electron donor. The polypeptide is Phosphoadenosine 5'-phosphosulfate reductase (Vibrio cholerae serotype O1 (strain ATCC 39541 / Classical Ogawa 395 / O395)).